The sequence spans 145 residues: MAARQIWARTGAALCRQPSAAPPPAPLWVRAGFRQQLSLTLCPANEGNCGGSAPSTPGRPERAARPSVSEELTAAERQIAELHAAACAAGQLNYVDPATGYVVLTQIAHLQRGECCGSACRHCPYGQVNVKDPSKKKQFNSYFYV.

S67 carries the post-translational modification Phosphoserine.

As to expression, expressed in retina and retinoblastoma.

This is an uncharacterized protein from Homo sapiens (Human).